Consider the following 176-residue polypeptide: MVGRLARLRDSIAHTGVPMKTVEDENFHITLRFIGEVSEPVAAEIGERLASIRFERFRIELRGLGAFPRPDRPRVVWVGVGGGAGELRRIRDEVERILTSMGFSPEKQEFHPHVTLARIKGARNLPALVKLLREMGDVEVGSVEVSSIRLKQSILTRQGPIYKTLYEVKAASSGRV.

Residue His-28 is the Proton donor of the active site. 2 consecutive short sequence motifs (HXTX) follow at residues 28-31 and 113-116; these read HITL and HVTL. Catalysis depends on His-113, which acts as the Proton acceptor.

It belongs to the 2H phosphoesterase superfamily. ThpR family.

It carries out the reaction a 3'-end 2',3'-cyclophospho-ribonucleotide-RNA + H2O = a 3'-end 2'-phospho-ribonucleotide-RNA + H(+). In terms of biological role, hydrolyzes RNA 2',3'-cyclic phosphodiester to an RNA 2'-phosphomonoester. This is RNA 2',3'-cyclic phosphodiesterase from Aeropyrum pernix (strain ATCC 700893 / DSM 11879 / JCM 9820 / NBRC 100138 / K1).